A 549-amino-acid chain; its full sequence is Lipase 5 (549 aa).

Residues 1-15 form the signal peptide; sequence MKLALALSLIASVAA. Cysteines 75 and 112 form a disulfide. The active-site Acyl-ester intermediate is the Ser-224. Cysteines 283 and 292 form a disulfide. N-linked (GlcNAc...) asparagine glycosylation is present at Asn-329. Glu-356 functions as the Charge relay system in the catalytic mechanism. An N-linked (GlcNAc...) asparagine glycan is attached at Asn-366. His-464 acts as the Charge relay system in catalysis.

The protein belongs to the type-B carboxylesterase/lipase family.

It catalyses the reaction a triacylglycerol + H2O = a diacylglycerol + a fatty acid + H(+). In Diutina rugosa (Yeast), this protein is Lipase 5 (LIP5).